Reading from the N-terminus, the 368-residue chain is Alanine racemase (368 aa).

Lys34 functions as the Proton acceptor; specific for D-alanine in the catalytic mechanism. Lys34 bears the N6-(pyridoxal phosphate)lysine mark. Arg132 is a substrate binding site. Tyr261 functions as the Proton acceptor; specific for L-alanine in the catalytic mechanism. Met309 lines the substrate pocket.

It belongs to the alanine racemase family. It depends on pyridoxal 5'-phosphate as a cofactor.

It catalyses the reaction L-alanine = D-alanine. The protein operates within amino-acid biosynthesis; D-alanine biosynthesis; D-alanine from L-alanine: step 1/1. Catalyzes the interconversion of L-alanine and D-alanine. May also act on other amino acids. This Carboxydothermus hydrogenoformans (strain ATCC BAA-161 / DSM 6008 / Z-2901) protein is Alanine racemase (alr).